We begin with the raw amino-acid sequence, 495 residues long: Cobyric acid synthase (495 aa).

A GATase cobBQ-type domain is found at 249 to 443 (EININVIRLP…LHGLFDNGAW (195 aa)). C330 functions as the Nucleophile in the catalytic mechanism. H435 is an active-site residue.

The protein belongs to the CobB/CobQ family. CobQ subfamily.

Its pathway is cofactor biosynthesis; adenosylcobalamin biosynthesis. Its function is as follows. Catalyzes amidations at positions B, D, E, and G on adenosylcobyrinic A,C-diamide. NH(2) groups are provided by glutamine, and one molecule of ATP is hydrogenolyzed for each amidation. The chain is Cobyric acid synthase from Gloeothece citriformis (strain PCC 7424) (Cyanothece sp. (strain PCC 7424)).